A 196-amino-acid chain; its full sequence is dITP/XTP pyrophosphatase (196 aa).

Substrate is bound at residue 7–12 (TGNAGK). Residues Glu-39 and Asp-68 each coordinate Mg(2+). Asp-68 serves as the catalytic Proton acceptor. Substrate contacts are provided by residues Ser-69, 153–156 (HGYD), Lys-176, and 181–182 (HR).

This sequence belongs to the HAM1 NTPase family. In terms of assembly, homodimer. Requires Mg(2+) as cofactor.

It catalyses the reaction XTP + H2O = XMP + diphosphate + H(+). It carries out the reaction dITP + H2O = dIMP + diphosphate + H(+). The enzyme catalyses ITP + H2O = IMP + diphosphate + H(+). Its function is as follows. Pyrophosphatase that catalyzes the hydrolysis of nucleoside triphosphates to their monophosphate derivatives, with a high preference for the non-canonical purine nucleotides XTP (xanthosine triphosphate), dITP (deoxyinosine triphosphate) and ITP. Seems to function as a house-cleaning enzyme that removes non-canonical purine nucleotides from the nucleotide pool, thus preventing their incorporation into DNA/RNA and avoiding chromosomal lesions. This is dITP/XTP pyrophosphatase from Thioalkalivibrio sulfidiphilus (strain HL-EbGR7).